Here is a 428-residue protein sequence, read N- to C-terminus: Adenylosuccinate synthetase (428 aa).

GTP is bound by residues 12 to 18 (GDEGKGK) and 40 to 42 (GHT). The active-site Proton acceptor is the Asp-13. Asp-13 and Gly-40 together coordinate Mg(2+). IMP is bound by residues 13–16 (DEGK), 38–41 (NAGH), Thr-133, Arg-147, Asn-224, Thr-239, and Arg-303. The active-site Proton donor is the His-41. 299–305 (TTTGRRR) serves as a coordination point for substrate. GTP contacts are provided by residues Arg-305, 331–333 (KLD), and 413–415 (GVG).

Belongs to the adenylosuccinate synthetase family. In terms of assembly, homodimer. Mg(2+) is required as a cofactor.

The protein resides in the cytoplasm. The catalysed reaction is IMP + L-aspartate + GTP = N(6)-(1,2-dicarboxyethyl)-AMP + GDP + phosphate + 2 H(+). It participates in purine metabolism; AMP biosynthesis via de novo pathway; AMP from IMP: step 1/2. Plays an important role in the de novo pathway and in the salvage pathway of purine nucleotide biosynthesis. Catalyzes the first committed step in the biosynthesis of AMP from IMP. This chain is Adenylosuccinate synthetase, found in Coprinopsis cinerea (strain Okayama-7 / 130 / ATCC MYA-4618 / FGSC 9003) (Inky cap fungus).